Here is a 559-residue protein sequence, read N- to C-terminus: Glucose-6-phosphate isomerase 4 (559 aa).

Residue Glu356 is the Proton donor of the active site. Catalysis depends on residues His387 and Lys513.

It belongs to the GPI family.

The protein localises to the cytoplasm. It carries out the reaction alpha-D-glucose 6-phosphate = beta-D-fructose 6-phosphate. It participates in carbohydrate biosynthesis; gluconeogenesis. It functions in the pathway carbohydrate degradation; glycolysis; D-glyceraldehyde 3-phosphate and glycerone phosphate from D-glucose: step 2/4. Functionally, catalyzes the reversible isomerization of glucose-6-phosphate to fructose-6-phosphate. This chain is Glucose-6-phosphate isomerase 4, found in Rhodococcus jostii (strain RHA1).